The following is a 538-amino-acid chain: Syncytin-2 (538 aa).

The first 15 residues, 1–15, serve as a signal peptide directing secretion; sequence MGLLLLLLILTPLLA. Residues 16–478 are Extracellular-facing; sequence AYCHPDFRLL…GWLNWEGTWK (463 aa). Residues 43-46 carry the CXXC motif; sequence CWLC. Intrachain disulfides connect C43-C46, C43-C439, and C431-C438. N-linked (GlcNAc...) asparagine glycosylation is found at N146, N177, N220, N241, N247, N312, and N332. A fusion peptide region spans residues 354 to 374; that stretch reads LIPLLVGLGIVGSAGTGIAGI. The CKS-17 signature appears at 414–430; that stretch reads LQNRRGLDMLTAAQGGI. A CX6CC motif is present at residues 431 to 439; it reads CLALDEKCC. N-linked (GlcNAc...) asparagine glycosylation occurs at N443. A helical transmembrane segment spans residues 479–499; it reads WFSWVLPFTGPLVSLLLLLLF. The Cytoplasmic portion of the chain corresponds to 500–538; it reads GPCLLNLITQFVSSRLQATKLQMKLNKRVHPRNSQESPF.

It belongs to the gamma type-C retroviral envelope protein family. HERV class-I FRD env subfamily. In terms of assembly, the surface and transmembrane proteins form a heterodimer. They are attached by non-covalent interactions or by a labile interchain disulfide bond. Post-translationally, specific enzymatic cleavages in vivo yield the mature SU and TM proteins. The CXXC motif is highly conserved across a broad range of retroviral envelope proteins. It is thought to participate in the formation of a labile disulfide bond possibly with the CX6CC motif present in the transmembrane protein.

Its subcellular location is the virion. The protein localises to the cell membrane. Functionally, this endogenous retroviral envelope protein has retained its original fusogenic properties and participates in trophoblast fusion and the formation of a syncytium during placenta morphogenesis. The interaction with MFSD2A is apparently important for this process. Endogenous envelope proteins may have kept, lost or modified their original function during evolution but this one can still make pseudotypes with MLV, HIV-1 or SIV-1 virions and confer infectivity. Retroviral envelope proteins mediate receptor recognition and membrane fusion during early infection. The surface protein mediates receptor recognition, while the transmembrane protein anchors the envelope heterodimer to the viral membrane through one transmembrane domain. The other hydrophobic domain, called fusion peptide, mediates fusion of the viral membrane with the target cell membrane. In Callithrix jacchus (White-tufted-ear marmoset), this protein is Syncytin-2 (ERVFRD-1).